The sequence spans 889 residues: Protein SEY1 homolog (889 aa).

Over 1–801 the chain is Cytoplasmic; sequence MDTKTQIIDY…ETGAKMSLKN (801 aa). One can recognise a GB1/RHD3-type G domain in the interval 31–277; the sequence is GFNYNVIAIL…IPSDGFAHYC (247 aa). Residue 41 to 48 coordinates GTP; that stretch reads GSQSSGKS. The disordered stretch occupies residues 429–449; the sequence is RKDGKGGSSPSAGDKKDTKDT. The stretch at 679–699 forms a coiled coil; it reads LDEIMDVLKSKLDEISDNLSS. Residues 802–822 traverse the membrane as a helical segment; sequence VPLFFWVILLILGWNELLFFT. Over 823–825 the chain is Lumenal; that stretch reads RFF. Residues 826–846 form a helical membrane-spanning segment; the sequence is FRLNIILPLFLAAAVILSTLV. Topologically, residues 847–889 are cytoplasmic; the sequence is FNGNMEVLSIINKAVFFLAKNSFGVYRQLQAMGGKAAQGAAAD.

This sequence belongs to the TRAFAC class dynamin-like GTPase superfamily. GB1/RHD3 GTPase family. RHD3 subfamily.

The protein localises to the endoplasmic reticulum membrane. In terms of biological role, probable GTP-binding protein involved in generating and maintaining the structure of the tubular endoplasmic reticulum network. The polypeptide is Protein SEY1 homolog (Plasmodium vivax (strain Salvador I)).